Here is a 133-residue protein sequence, read N- to C-terminus: 14 kDa fatty acid-binding protein (133 aa).

Residues Arg-107 and 127 to 129 (RNY) each bind (5Z,8Z,11Z,14Z)-eicosatetraenoate. Residues Arg-107 and 127–129 (RNY) each bind (9Z)-octadecenoate.

The protein belongs to the calycin superfamily. Fatty-acid binding protein (FABP) family. As to expression, tubercles, muscle layers and body.

It localises to the cytoplasm. Its function is as follows. May play a role in the transport of fatty acids. Binds various fatty acids, such as arachidonic, oleic, palmitic and linolenic acid (in vitro). This is 14 kDa fatty acid-binding protein from Schistosoma mansoni (Blood fluke).